The chain runs to 270 residues: Interleukin-1 alpha (270 aa).

Residues 1–112 (MAKVPDLFED…DTEEEIIKPR (112 aa)) constitute a propeptide that is removed on maturation. Lysine 82 bears the N6-acetyllysine mark. The nuclear localization signal (NLS) stretch occupies residues 82–86 (KKRRL). Serine 87 is modified (phosphoserine). Residues asparagine 102 and asparagine 141 are each glycosylated (N-linked (GlcNAc...) asparagine).

This sequence belongs to the IL-1 family. As to quaternary structure, monomer. Interacts with TMED10; the interaction mediates the translocation from the cytoplasm into the ERGIC (endoplasmic reticulum-Golgi intermediate compartment) and thereby secretion. Interacts with IL1R1. Interacts with S100A13; this interaction is the first step in the export of IL1A, followed by direct translocation of this complex across the plasma membrane. In terms of processing, acetylated within its nuclear localization sequence, which impacts subcellular localization. Post-translationally, proteolytic processed by CAPN1 in a calcium-dependent manner. Cleavage from 31 kDa precursor to 18 kDa biologically active molecules. Phosphorylated. Phosphorylation greatly enhances susceptibility to digestion and promotes the conversion of pre-IL1A alpha to the biologically active IL1A.

The protein localises to the nucleus. It is found in the cytoplasm. The protein resides in the secreted. Cytokine constitutively present intracellularly in nearly all resting non-hematopoietic cells that plays an important role in inflammation and bridges the innate and adaptive immune systems. After binding to its receptor IL1R1 together with its accessory protein IL1RAP, forms the high affinity interleukin-1 receptor complex. Signaling involves the recruitment of adapter molecules such as MYD88, IRAK1 or IRAK4. In turn, mediates the activation of NF-kappa-B and the three MAPK pathways p38, p42/p44 and JNK pathways. Within the cell, acts as an alarmin and cell death results in its liberation in the extracellular space after disruption of the cell membrane to induce inflammation and alert the host to injury or damage. In addition to its role as a danger signal, which occurs when the cytokine is passively released by cell necrosis, directly senses DNA damage and acts as signal for genotoxic stress without loss of cell integrity. This Sus scrofa (Pig) protein is Interleukin-1 alpha (IL1A).